A 205-amino-acid polypeptide reads, in one-letter code: Small ribosomal subunit protein mS26 (205 aa).

The transit peptide at 1-26 (MLRALSTLGARPLGRPPAQFLLLARG) directs the protein to the mitochondrion.

The protein belongs to the mitochondrion-specific ribosomal protein mS26 family. Component of the mitochondrial ribosome small subunit (28S) which comprises a 12S rRNA and about 30 distinct proteins.

It is found in the mitochondrion. The protein is Small ribosomal subunit protein mS26 (MRPS26) of Bos taurus (Bovine).